The following is a 669-amino-acid chain: Elongation factor G 2 (669 aa).

The tr-type G domain maps to 1-276 (MSIRNIGIMA…SIVDYLPSPF (276 aa)). GTP contacts are provided by residues 10–17 (AHIDAGKT), 74–78 (DTPGH), and 128–131 (NKMD).

The protein belongs to the TRAFAC class translation factor GTPase superfamily. Classic translation factor GTPase family. EF-G/EF-2 subfamily.

Its subcellular location is the cytoplasm. In terms of biological role, catalyzes the GTP-dependent ribosomal translocation step during translation elongation. During this step, the ribosome changes from the pre-translocational (PRE) to the post-translocational (POST) state as the newly formed A-site-bound peptidyl-tRNA and P-site-bound deacylated tRNA move to the P and E sites, respectively. Catalyzes the coordinated movement of the two tRNA molecules, the mRNA and conformational changes in the ribosome. In Borreliella burgdorferi (strain ATCC 35210 / DSM 4680 / CIP 102532 / B31) (Borrelia burgdorferi), this protein is Elongation factor G 2 (fusB).